The following is an 803-amino-acid chain: Chromatin structure-remodeling complex subunit rsc1 (803 aa).

Residues 9 to 117 (ADDKKLQRVL…EFCIQQLRTF (109 aa)) form the Bromo 1 domain. A compositionally biased stretch (polar residues) spans 128–154 (WPNTDSPSATTSSPISRNPEYSVSPPN). The interval 128 to 160 (WPNTDSPSATTSSPISRNPEYSVSPPNGSKFVK) is disordered. Residue Ser168 is modified to Phosphoserine. Residues 174–206 (EEDSDVKGRSMVGRDGRYKSEDLKRRKLQPSSK) form a disordered region. Positions 178–197 (DVKGRSMVGRDGRYKSEDLK) are enriched in basic and acidic residues. Positions 206-316 (KPLSSLEARA…NYLADVLRLE (111 aa)) constitute a Bromo 2 domain. Ser331 and Ser334 each carry phosphoserine. The 119-residue stretch at 351 to 469 (TLLNVGDWVL…DDTKQFSKIK (119 aa)) folds into the BAH domain. Polar residues predominate over residues 512–525 (GLPSPATTDSNTHM). The interval 512–616 (GLPSPATTDS…RTSTKSTSPI (105 aa)) is disordered. The span at 526–539 (LPSQGSLLPPSSIS) shows a compositional bias: low complexity. Polar residues-rich tracts occupy residues 540-553 (ETKS…TPLS) and 605-615 (IMRTSTKSTSP).

This sequence belongs to the RSC1 family. In terms of assembly, component of the RSC complex composed of at least arp9, arp42, rsc1, rsc4, rsc7, rsc9, rsc58, sfh1, snf21, ssr1, ssr2, ssr3 and ssr4. The complex interacts with histone and histone variant components of centromeric chromatin.

It localises to the nucleus. In terms of biological role, component of the chromatin structure remodeling complex (RSC), which is involved in transcription regulation and nucleosome positioning. Controls particularly membrane and organelle development genes. This Schizosaccharomyces pombe (strain 972 / ATCC 24843) (Fission yeast) protein is Chromatin structure-remodeling complex subunit rsc1 (rsc1).